We begin with the raw amino-acid sequence, 89 residues long: MAVADIKTAKIVKENARSANDTGSPEVQVSLLTARINELTPHFKANTKDHHSRCGLLKMVSRRRRLLDYLKGKDLDCYRALIEKLGLRK.

Belongs to the universal ribosomal protein uS15 family. In terms of assembly, part of the 30S ribosomal subunit. Forms a bridge to the 50S subunit in the 70S ribosome, contacting the 23S rRNA.

One of the primary rRNA binding proteins, it binds directly to 16S rRNA where it helps nucleate assembly of the platform of the 30S subunit by binding and bridging several RNA helices of the 16S rRNA. Its function is as follows. Forms an intersubunit bridge (bridge B4) with the 23S rRNA of the 50S subunit in the ribosome. The chain is Small ribosomal subunit protein uS15 from Polynucleobacter necessarius subsp. necessarius (strain STIR1).